Consider the following 33-residue polypeptide: Protamine (33 aa).

Residues 1–33 (MPRRRRSSSRPVRRRRRPRVSRRRRRRGGRRRR) form a disordered region.

In terms of tissue distribution, testis.

It localises to the nucleus. Its subcellular location is the chromosome. Protamines substitute for histones in the chromatin of sperm during the haploid phase of spermatogenesis. They compact sperm DNA into a highly condensed, stable and inactive complex. This Oncorhynchus keta (Chum salmon) protein is Protamine.